The sequence spans 352 residues: Neutral protease 2 (352 aa).

Residues Met-1–Ser-19 form the signal peptide. The propeptide occupies Ala-20–Arg-175. 3 cysteine pairs are disulfide-bonded: Cys-181–Cys-253, Cys-260–Cys-278, and Cys-292–Cys-352. Position 303 (His-303) interacts with Zn(2+). Glu-304 is an active-site residue. Zn(2+)-binding residues include His-307 and Asp-318.

It belongs to the peptidase M35 family. The cofactor is Zn(2+).

It carries out the reaction Preferential cleavage of bonds with hydrophobic residues in P1'. Also 3-Asn-|-Gln-4 and 8-Gly-|-Ser-9 bonds in insulin B chain.. Functionally, metalloprotease that shows high activities on basic nuclear substrates such as histone and protamine. The sequence is that of Neutral protease 2 from Aspergillus oryzae (strain ATCC 42149 / RIB 40) (Yellow koji mold).